The chain runs to 780 residues: ATP-dependent 6-phosphofructokinase, muscle type (780 aa).

Residue Thr2 is modified to N-acetylthreonine. Residues 2–390 (THEEHHAAKT…NWEVYKLLAH (389 aa)) form an N-terminal catalytic PFK domain 1 region. ATP-binding positions include Gly25, 88–89 (RC), and 118–121 (GDGS). Asp119 lines the Mg(2+) pocket. Ser133 carries the phosphoserine modification. Substrate-binding positions include 164–166 (SID), Arg201, 208–210 (MGR), Glu264, Arg292, and 298–301 (HVQR). Asp166 acts as the Proton acceptor in catalysis. Position 377 is a phosphoserine (Ser377). An interdomain linker region spans residues 391 to 401 (VRPPVSKSGSH). Residues 402–780 (TVAVMNVGAP…TRKRSGEGAV (379 aa)) are C-terminal regulatory PFK domain 2. Residues Arg471 and 528–532 (TVSNN) contribute to the beta-D-fructose 2,6-bisphosphate site. O-linked (GlcNAc) serine glycosylation occurs at Ser530. Lys557 bears the N6-(2-hydroxyisobutyryl)lysine mark. Beta-D-fructose 2,6-bisphosphate-binding positions include Arg566, 573-575 (MGG), Glu629, Arg655, and 661-664 (HMQQ). Ser667 bears the Phosphoserine mark. Arg735 is a binding site for beta-D-fructose 2,6-bisphosphate. Ser775 carries the phosphoserine modification.

The protein belongs to the phosphofructokinase type A (PFKA) family. ATP-dependent PFK group I subfamily. Eukaryotic two domain clade 'E' sub-subfamily. As to quaternary structure, homo- and heterotetramers. Phosphofructokinase (PFK) enzyme functions as a tetramer composed of different combinations of 3 types of subunits, called PFKM (M), PFKL (L) and PFKP (P). The composition of the PFK tetramer differs according to the tissue type it is present in. The kinetic and regulatory properties of the tetrameric enzyme are dependent on the subunit composition, hence can vary across tissues. Interacts (via C-terminus) with HK1 (via N-terminal spermatogenic cell-specific region). Mg(2+) serves as cofactor. Post-translationally, glcNAcylation decreases enzyme activity.

It localises to the cytoplasm. It catalyses the reaction beta-D-fructose 6-phosphate + ATP = beta-D-fructose 1,6-bisphosphate + ADP + H(+). It functions in the pathway carbohydrate degradation; glycolysis; D-glyceraldehyde 3-phosphate and glycerone phosphate from D-glucose: step 3/4. With respect to regulation, allosterically activated by ADP, AMP, or fructose 2,6-bisphosphate, and allosterically inhibited by ATP or citrate. Catalyzes the phosphorylation of D-fructose 6-phosphate to fructose 1,6-bisphosphate by ATP, the first committing step of glycolysis. The protein is ATP-dependent 6-phosphofructokinase, muscle type (PFKM) of Macaca fascicularis (Crab-eating macaque).